The primary structure comprises 454 residues: SH2 domain-containing protein 4A (454 aa).

Disordered stretches follow at residues 45-65, 107-131, 152-177, and 237-302; these read AMER…NGKS, EQEA…KSQY, KEEL…SSSS, and RKSK…AYPQ. A compositionally biased stretch (basic and acidic residues) spans 107 to 120; that stretch reads EQEAEEPRKTHSEE. 2 positions are modified to phosphoserine: Ser-118 and Ser-124. Positions 240 to 259 are enriched in basic and acidic residues; the sequence is KAADEKRRSLAKQAREDYKR. Phosphoserine occurs at positions 261 and 315. The SH2 domain occupies 347–440; it reads WFHGILTLKK…LGKELLLYPC (94 aa).

In terms of assembly, interacts with ESR1. As to expression, ubiquitously expressed. Aberrantly expressed in some cancers.

It is found in the cytoplasm. Inhibits estrogen-induced cell proliferation by competing with PLCG for binding to ESR1, blocking the effect of estrogen on PLCG and repressing estrogen-induced proliferation. May play a role in T-cell development and function. This Homo sapiens (Human) protein is SH2 domain-containing protein 4A (SH2D4A).